The sequence spans 617 residues: Probable endochitinase (617 aa).

The GH18 domain maps to 53–426; sequence YIRPCYFTNW…SVIAKELGGV (374 aa). A disulfide bridge links C57 with C82. Chitin contacts are provided by residues 109–110 and 136–139; these read DW and GGWS. The Proton donor role is filled by E179. Chitin-binding positions include Y180 and 245-248; that span reads MSYD. N-linked (GlcNAc...) asparagine glycosylation occurs at N310. Position 394 (W394) interacts with chitin. Chitin-binding type-2 domains follow at residues 478–534 and 563–617; these read TNVC…GCSV and AFKC…KCAK. Intrachain disulfides connect C511/C524 and C594/C607.

This sequence belongs to the glycosyl hydrolase 18 family. Chitinase class II subfamily.

The enzyme catalyses Random endo-hydrolysis of N-acetyl-beta-D-glucosaminide (1-&gt;4)-beta-linkages in chitin and chitodextrins.. The sequence is that of Probable endochitinase (cht-1) from Caenorhabditis elegans.